The chain runs to 162 residues: MAKLHRLISAVLRLAAAGAAAAAAIIMVTSHETTSFFGIEMEAKYSYTPSFVFFVVAFAVAFAYSLLALLARPGSTASRLLLLSDVMVGMLLTGAVAATGAISQVGKSGNEHAGWLPICAQVQAYCSHVMGALIAGFVSLLLYFLIIMYSLHAVAEPLCSCH.

The Cytoplasmic segment spans residues Met1–Leu7. The chain crosses the membrane as a helical span at residues Ile8–Val28. The Extracellular portion of the chain corresponds to Thr29 to Ser50. A helical transmembrane segment spans residues Phe51–Ala71. At Arg72–Arg79 the chain is on the cytoplasmic side. The helical transmembrane segment at Leu80 to Gly100 threads the bilayer. The Extracellular segment spans residues Ala101–His128. The helical transmembrane segment at Val129–Tyr149 threads the bilayer. Topologically, residues Ser150 to His162 are cytoplasmic.

It belongs to the Casparian strip membrane proteins (CASP) family. Homodimer and heterodimers.

The protein resides in the cell membrane. This Sorghum bicolor (Sorghum) protein is CASP-like protein 1C1.